The chain runs to 1012 residues: Alanine--tRNA ligase, mitochondrial (1012 aa).

A mitochondrion-targeting transit peptide spans 1-24 (MYNSAKQLQRVLTAREIRKTFLDH). Positions 656, 660, 766, and 770 each coordinate Zn(2+).

It belongs to the class-II aminoacyl-tRNA synthetase family. Monomer. Zn(2+) serves as cofactor.

It localises to the mitochondrion. The catalysed reaction is tRNA(Ala) + L-alanine + ATP = L-alanyl-tRNA(Ala) + AMP + diphosphate. Its function is as follows. Catalyzes the attachment of alanine to tRNA(Ala) in a two-step reaction: alanine is first activated by ATP to form Ala-AMP and then transferred to the acceptor end of tRNA(Ala). Also edits incorrectly charged tRNA(Ala) via its editing domain. The polypeptide is Alanine--tRNA ligase, mitochondrial (Drosophila melanogaster (Fruit fly)).